A 407-amino-acid chain; its full sequence is MKPTVWHHLRLCPHGHPDETIDDAAIAVDETGAIVWLGACAALPHGYAHWRREDLHGAWVTPGLVDCHTHLVYGGTRADEFAQRLAGVSYEEIARQGGGIVSTVRATRAADETALFVQAAARLQPLLAEGVTAIEIKSGYGLDLASERKMLRVARQLGERFPVSVYTTFLGAHALPPEYAGRADAYIDEICERMLPTLADEGLIDAVDVFCERIGFSLAQTERVFEAATRRGLPVKLHAEQLSDAGGTALAARYHALSADHLEFLDEAGIEAMKAAGTVAVLLPGAYYFIRETQLPPIDLLRRHGVPIALATDHNPGTSPLESLLLTMNLGCTLFRMTVPEVLQGVTRHAAAALGRADRHGALEVGRQADFAVWSVGSLAELAYWIGRPLCEQVVRGGTTVFRRMIG.

Residues His68 and His70 each contribute to the Fe(3+) site. His68 and His70 together coordinate Zn(2+). 4-imidazolone-5-propanoate is bound by residues Arg77, Tyr140, and His173. Tyr140 is an N-formimidoyl-L-glutamate binding site. His238 serves as a coordination point for Fe(3+). Zn(2+) is bound at residue His238. Gln241 provides a ligand contact to 4-imidazolone-5-propanoate. Residue Asp313 coordinates Fe(3+). Asp313 is a binding site for Zn(2+). The N-formimidoyl-L-glutamate site is built by Asn315 and Gly317. Thr318 contributes to the 4-imidazolone-5-propanoate binding site.

It belongs to the metallo-dependent hydrolases superfamily. HutI family. The cofactor is Zn(2+). Fe(3+) is required as a cofactor.

It localises to the cytoplasm. The enzyme catalyses 4-imidazolone-5-propanoate + H2O = N-formimidoyl-L-glutamate. It participates in amino-acid degradation; L-histidine degradation into L-glutamate; N-formimidoyl-L-glutamate from L-histidine: step 3/3. Its function is as follows. Catalyzes the hydrolytic cleavage of the carbon-nitrogen bond in imidazolone-5-propanoate to yield N-formimidoyl-L-glutamate. It is the third step in the universal histidine degradation pathway. This Burkholderia multivorans (strain ATCC 17616 / 249) protein is Imidazolonepropionase.